Consider the following 349-residue polypeptide: Probable trehalose-phosphate phosphatase H (349 aa).

The protein belongs to the trehalose phosphatase family. Requires a divalent metal cation as cofactor.

The catalysed reaction is alpha,alpha-trehalose 6-phosphate + H2O = alpha,alpha-trehalose + phosphate. The protein operates within glycan biosynthesis; trehalose biosynthesis. Functionally, removes the phosphate from trehalose 6-phosphate to produce free trehalose. Trehalose accumulation in plant may improve abiotic stress tolerance. This chain is Probable trehalose-phosphate phosphatase H (TPPH), found in Arabidopsis thaliana (Mouse-ear cress).